Reading from the N-terminus, the 473-residue chain is UDP-N-acetylmuramate--L-alanine ligase (473 aa).

Residue 123–129 (GTHGKTT) coordinates ATP.

It belongs to the MurCDEF family.

The protein localises to the cytoplasm. The enzyme catalyses UDP-N-acetyl-alpha-D-muramate + L-alanine + ATP = UDP-N-acetyl-alpha-D-muramoyl-L-alanine + ADP + phosphate + H(+). Its pathway is cell wall biogenesis; peptidoglycan biosynthesis. In terms of biological role, cell wall formation. The polypeptide is UDP-N-acetylmuramate--L-alanine ligase (Marinomonas sp. (strain MWYL1)).